Reading from the N-terminus, the 1528-residue chain is Mitogen-activated protein kinase kinae kinase MCK1 (1528 aa).

Positions 1-11 are enriched in low complexity; that stretch reads MYPGSSQSRPY. 10 disordered regions span residues 1 to 84, 109 to 208, 303 to 418, 449 to 481, 607 to 652, 695 to 731, 746 to 786, 811 to 929, 943 to 1012, and 1086 to 1191; these read MYPG…PAPR, ATAP…VPGI, VHAR…NNVR, INGR…KLPF, VKPP…EARL, GKPV…APSA, VQGS…SQPM, SANN…SDDG, KKAK…EDGK, and ATPL…ALLR. Pro residues predominate over residues 12–21; it reads QVPPPPPMSP. Positions 22–31 are enriched in low complexity; that stretch reads PLSQMHQQMS. Positions 53 to 64 are enriched in pro residues; it reads APPPPPPGPPPA. Residues 157-173 are compositionally biased toward low complexity; it reads SSQTWQTTSSSSTNTAS. Composition is skewed to polar residues over residues 174–183, 191–205, and 318–327; these read VNDNVQSNAP, NNSA…SSNV, and HGRQGSINSR. The segment covering 328-337 has biased composition (basic and acidic residues); sequence GNDKGTHDGS. Residues 338–363 show a composition bias toward polar residues; sequence DSPNTPSSQSRSTTIPTFPDGSSFSN. Low complexity predominate over residues 396-408; that stretch reads SSTPKSSTLSVSP. Over residues 409–418 the composition is skewed to polar residues; sequence HSSRFGNNVR. Polar residues-rich tracts occupy residues 613–622 and 630–641; these read SQQSTWSAGD and GTSSSMSRQQNT. Basic and acidic residues-rich tracts occupy residues 642 to 652 and 698 to 714; these read LKDDQSEEARL and VDFD…KNTD. Positions 846 to 860 are enriched in polar residues; sequence RSQTAGDLSPISQMP. Acidic residues predominate over residues 917–928; the sequence is QSDDDSGDDSDD. Positions 977–986 are enriched in polar residues; it reads VSFNSPQSAR. Positions 1001-1012 are enriched in basic and acidic residues; it reads PKSDMWDSEDGK. The span at 1086–1111 shows a compositional bias: polar residues; sequence ATPLNSLPPSRVQSMYNESDTLGSDE. Basic and acidic residues predominate over residues 1142–1152; it reads SIREKARGAHE. Positions 1158-1188 are enriched in polar residues; the sequence is TQTSMAAPQGLSRSGGTPATETQPTQNNSSA. Positions 1238-1507 constitute a Protein kinase domain; sequence WFKGQLIGKG…NKLLSQHPFC (270 aa). ATP-binding positions include 1244–1252 and lysine 1267; that span reads IGKGTYGRV.

The protein belongs to the protein kinase superfamily. STE Ser/Thr protein kinase family. MAP kinase kinase kinase subfamily. Interacts with the adapter protein MST50 and MIP11.

It carries out the reaction L-seryl-[protein] + ATP = O-phospho-L-seryl-[protein] + ADP + H(+). It catalyses the reaction L-threonyl-[protein] + ATP = O-phospho-L-threonyl-[protein] + ADP + H(+). Mitogen-activated protein kinase kinase kinase; part of the MCK1-MKK2-MPS1 MAP kinase (MAPK) signal transduction cascade that is essential for appressorium formation, penetration and invasive growth. Beside its role in pathogenesis, the MPS1 cascade is active in conidiation and cellular stress responses. Targets downstream of the the MPS1-MAPK pathway include transcription factors MIG1 and SWI6, as well as GSK1 and MPG1. This Pyricularia oryzae (strain 70-15 / ATCC MYA-4617 / FGSC 8958) (Rice blast fungus) protein is Mitogen-activated protein kinase kinae kinase MCK1.